A 139-amino-acid chain; its full sequence is uncharacterized protein (139 aa).

The HIT domain occupies 5 to 114 (IFCKIINKEL…IPRFKNDGFG (110 aa)). The Histidine triad motif signature appears at 99–103 (HTHFH).

This is an uncharacterized protein from Borreliella burgdorferi (strain ATCC 35210 / DSM 4680 / CIP 102532 / B31) (Borrelia burgdorferi).